Consider the following 442-residue polypeptide: Chromosomal replication initiator protein DnaA (442 aa).

Residues M1–R69 are domain I, interacts with DnaA modulators. The segment at R69 to A103 is domain II. The domain III, AAA+ region stretch occupies residues S104 to V320. 4 residues coordinate ATP: G148, G150, K151, and T152. Residues S321 to H442 are domain IV, binds dsDNA.

The protein belongs to the DnaA family. In terms of assembly, oligomerizes as a right-handed, spiral filament on DNA at oriC.

Its subcellular location is the cytoplasm. Plays an essential role in the initiation and regulation of chromosomal replication. ATP-DnaA binds to the origin of replication (oriC) to initiate formation of the DNA replication initiation complex once per cell cycle. Binds the DnaA box (a 9 base pair repeat at the origin) and separates the double-stranded (ds)DNA. Forms a right-handed helical filament on oriC DNA; dsDNA binds to the exterior of the filament while single-stranded (ss)DNA is stabiized in the filament's interior. The ATP-DnaA-oriC complex binds and stabilizes one strand of the AT-rich DNA unwinding element (DUE), permitting loading of DNA polymerase. After initiation quickly degrades to an ADP-DnaA complex that is not apt for DNA replication. Binds acidic phospholipids. The sequence is that of Chromosomal replication initiator protein DnaA from Gloeobacter violaceus (strain ATCC 29082 / PCC 7421).